The primary structure comprises 213 residues: Pyrrolidone-carboxylate peptidase (213 aa).

Active-site residues include E78, C141, and H165.

The protein belongs to the peptidase C15 family. As to quaternary structure, homotetramer.

The protein resides in the cytoplasm. It catalyses the reaction Release of an N-terminal pyroglutamyl group from a polypeptide, the second amino acid generally not being Pro.. Its function is as follows. Removes 5-oxoproline from various penultimate amino acid residues except L-proline. The chain is Pyrrolidone-carboxylate peptidase from Clostridium perfringens (strain 13 / Type A).